A 463-amino-acid polypeptide reads, in one-letter code: Argininosuccinate lyase (463 aa).

2-(N(omega)-L-arginino)succinate contacts are provided by Ser27, Asn115, and Thr161. The active-site Proton acceptor is the His162. The active-site Proton donor is Ser283. 2-(N(omega)-L-arginino)succinate-binding residues include Asn291, Tyr323, Gln328, and Lys331.

This sequence belongs to the lyase 1 family. Argininosuccinate lyase subfamily. As to quaternary structure, homotetramer.

It carries out the reaction 2-(N(omega)-L-arginino)succinate = fumarate + L-arginine. Its pathway is amino-acid biosynthesis; L-arginine biosynthesis; L-arginine from L-ornithine and carbamoyl phosphate: step 3/3. This Saccharomyces paradoxus (Yeast) protein is Argininosuccinate lyase (ARG4).